A 339-amino-acid chain; its full sequence is FR-33289 synthase (339 aa).

The Fe(2+) site is built by His150, Asp152, and His288.

This sequence belongs to the TfdA dioxygenase family. As to quaternary structure, homodimer. Fe(2+) serves as cofactor.

The enzyme catalyses 3-(N-acetyl-N-hydroxy)aminopropylphosphonate + 2-oxoglutarate + O2 = (R)-(3-(acetylhydroxyamino)-2-hydroxypropyl)phosphonate + succinate + CO2. It functions in the pathway antibiotic biosynthesis. Monooxygenase involved in the biosynthesis of the phosphonate antibiotic FR-33289, an antimalarial agent. Catalyzes the oxidative decarboxylation of the antibiotic FR-900098 (3-(N-acetyl-N-hydroxy)aminopropylphosphonate) to form FR-33289 ((R)-(3-(acetylhydroxyamino)-2-hydroxypropyl)phosphonate). The polypeptide is FR-33289 synthase (Streptomyces rubellomurinus (strain ATCC 31215)).